A 939-amino-acid chain; its full sequence is Dynamin-like GTPase MGM1, mitochondrial (939 aa).

The transit peptide at 1 to 27 directs the protein to the mitochondrion; that stretch reads MSAQLRAAAAITPAARRVISGPAAVRR. The helical transmembrane segment at 85-103 threads the bilayer; it reads FIRVPALFGGMMLGAVGWV. A compositionally biased stretch (gly residues) spans 170–183; that stretch reads AGEGSGSGEGGPNG. The segment at 170 to 196 is disordered; sequence AGEGSGSGEGGPNGGPEPPRQSRAGAA. Positions 249-522 constitute a Dynamin-type G domain; sequence TVTLPSIVVI…LEQQMSSKLN (274 aa). The interval 259–266 is G1 motif; it reads GSQSSGKS. The GTP site is built by S262, G264, K265, S266, S267, and G281. A Mg(2+)-binding site is contributed by S266. A G2 motif region spans residues 285-287; sequence ITR. T286 and D359 together coordinate Mg(2+). The G3 motif stretch occupies residues 359–362; sequence DLPG. Positions 427–430 are G4 motif; it reads TKMD. K428, D430, and S457 together coordinate GTP. Residues 456-459 are G5 motif; sequence ISKL. The tract at residues 549 to 703 is stalk region; it reads SAESYLAASL…TSDGIEISLK (155 aa). Residues 710–809 are paddle region; sequence DIQPNEWAQG…LSLRIQAAKS (100 aa). The segment at 810–877 is stalk region; that stretch reads RQCKTLTNKY…GGGLEKFARE (68 aa). C812 and C821 are oxidised to a cystine. The GED domain maps to 815-909; that stretch reads LTNKYYCPEV…KIEELHRISS (95 aa).

The protein belongs to the TRAFAC class dynamin-like GTPase superfamily. Dynamin/Fzo/YdjA family. In terms of assembly, oligomeric complex consisting of membrane-bound and soluble forms of MGM1. In terms of processing, cleavage of the transit peptide by mitochondrial processing protease (MPP) produces a long integral membrane form of MGM1 (L-MGM1). Further processing by the rhomboid protease PCP1 produces a short peripheral membrane form of MGM1 (S-MGM1). Both forms are required for full activity.

Its subcellular location is the mitochondrion inner membrane. The protein resides in the mitochondrion intermembrane space. It catalyses the reaction GTP + H2O = GDP + phosphate + H(+). Functionally, dynamin-related GTPase that is essential for normal mitochondrial morphology by mediating fusion of the mitochondrial inner membranes, regulating cristae morphology and maintaining respiratory chain function. Exists in two forms: the transmembrane, long form (Dynamin-like GTPase MGM1, long form; L-MGM1), which is tethered to the inner mitochondrial membrane, and the short soluble form (Dynamin-like GTPase MGM1, short form; S-MGM1), which results from proteolytic cleavage and localizes in the intermembrane space. Both forms (L-MGM1 and S-MGM1) cooperate to catalyze the fusion of the mitochondrial inner membrane. The equilibrium between L-MGM1 and S-MGM1 is essential: excess levels of S-MGM1, following loss of mitochondrial membrane potential, lead to an impaired equilibrium between L-MGM1 and S-MGM1, inhibiting mitochondrial fusion. Plays a role in the maintenance and remodeling of mitochondrial cristae, some invaginations of the mitochondrial inner membrane that provide an increase in the surface area. Probably acts by forming helical filaments at the inside of inner membrane tubes with the shape and dimensions of crista junctions. In terms of biological role, constitutes the transmembrane long form (L-MGM1) that plays a central role in mitochondrial inner membrane fusion and cristae morphology. L-MGM1 and the soluble short form (S-MGM1) form higher-order helical assemblies that coordinate the fusion of mitochondrial inner membranes. Inner membrane-anchored L-MGM1 molecules initiate membrane remodeling by recruiting soluble S-MGM1 to rapidly polymerize into a flexible cylindrical scaffold encaging the mitochondrial inner membrane. Once at the membrane surface, the formation of S-MGM1 helices induce bilayer curvature. MGM1 dimerization through the paddle region, which inserts into cardiolipin-containing membrane, promotes GTP hydrolysis and the helical assembly of a flexible MGM1 lattice on the membrane, which drives membrane curvature and mitochondrial fusion. Constitutes the soluble short form (S-MGM1) generated by cleavage by PCP1, which plays a central role in mitochondrial inner membrane fusion and cristae morphology. The transmembrane long form (L-MGM1) and the S-MGM1 form higher-order helical assemblies that coordinate the fusion of mitochondrial inner membranes. Inner membrane-anchored L-MGM1 molecules initiate membrane remodeling by recruiting soluble S-MGM1 to rapidly polymerize into a flexible cylindrical scaffold encaging the mitochondrial inner membrane. Once at the membrane surface, the formation of S-MGM1 helices induce bilayer curvature. MGM1 dimerization through the paddle region, which inserts into cardiolipin-containing membrane, promotes GTP hydrolysis and the helical assembly of a flexible MGM1 lattice on the membrane, which drives membrane curvature and mitochondrial fusion. Excess levels of S-MGM1 produced by cleavage by PCP1 following stress conditions that induce loss of mitochondrial membrane potential, lead to an impaired equilibrium between L-MGM1 and S-MGM1, thereby inhibiting mitochondrial fusion. In Chaetomium thermophilum (strain DSM 1495 / CBS 144.50 / IMI 039719) (Thermochaetoides thermophila), this protein is Dynamin-like GTPase MGM1, mitochondrial.